The following is a 341-amino-acid chain: DNA fragmentation factor subunit beta (341 aa).

One can recognise a CIDE-N domain in the interval 7-83 (KPKTFKLRSL…LLTAGQTWQG (77 aa)).

Heterodimer of DFFA and DFFB. Interacts with H1-1.

It localises to the cytoplasm. Its subcellular location is the nucleus. With respect to regulation, inhibited by DFFA (DFF45). Interacts with HIST1H1A. In terms of biological role, nuclease that induces DNA fragmentation and chromatin condensation during apoptosis. Degrades naked DNA and induces apoptotic morphology. The sequence is that of DNA fragmentation factor subunit beta (DFFB) from Bos taurus (Bovine).